A 248-amino-acid chain; its full sequence is Phosphoribosylaminoimidazole-succinocarboxamide synthase (248 aa).

It belongs to the SAICAR synthetase family.

The enzyme catalyses 5-amino-1-(5-phospho-D-ribosyl)imidazole-4-carboxylate + L-aspartate + ATP = (2S)-2-[5-amino-1-(5-phospho-beta-D-ribosyl)imidazole-4-carboxamido]succinate + ADP + phosphate + 2 H(+). Its pathway is purine metabolism; IMP biosynthesis via de novo pathway; 5-amino-1-(5-phospho-D-ribosyl)imidazole-4-carboxamide from 5-amino-1-(5-phospho-D-ribosyl)imidazole-4-carboxylate: step 1/2. The sequence is that of Phosphoribosylaminoimidazole-succinocarboxamide synthase (purC) from Methanothermobacter thermautotrophicus (strain ATCC 29096 / DSM 1053 / JCM 10044 / NBRC 100330 / Delta H) (Methanobacterium thermoautotrophicum).